The chain runs to 317 residues: Methionyl-tRNA formyltransferase (317 aa).

112–115 (SLLP) is a (6S)-5,6,7,8-tetrahydrofolate binding site.

The protein belongs to the Fmt family.

It catalyses the reaction L-methionyl-tRNA(fMet) + (6R)-10-formyltetrahydrofolate = N-formyl-L-methionyl-tRNA(fMet) + (6S)-5,6,7,8-tetrahydrofolate + H(+). In terms of biological role, attaches a formyl group to the free amino group of methionyl-tRNA(fMet). The formyl group appears to play a dual role in the initiator identity of N-formylmethionyl-tRNA by promoting its recognition by IF2 and preventing the misappropriation of this tRNA by the elongation apparatus. The sequence is that of Methionyl-tRNA formyltransferase from Geobacter sulfurreducens (strain ATCC 51573 / DSM 12127 / PCA).